The sequence spans 212 residues: Large ribosomal subunit protein uL3 (212 aa).

An N5-methylglutamine modification is found at Q153.

It belongs to the universal ribosomal protein uL3 family. In terms of assembly, part of the 50S ribosomal subunit. Forms a cluster with proteins L14 and L19. In terms of processing, methylated by PrmB.

One of the primary rRNA binding proteins, it binds directly near the 3'-end of the 23S rRNA, where it nucleates assembly of the 50S subunit. The sequence is that of Large ribosomal subunit protein uL3 from Shewanella pealeana (strain ATCC 700345 / ANG-SQ1).